Here is a 145-residue protein sequence, read N- to C-terminus: UPF0179 protein Msm_0285 (145 aa).

Belongs to the UPF0179 family.

This chain is UPF0179 protein Msm_0285, found in Methanobrevibacter smithii (strain ATCC 35061 / DSM 861 / OCM 144 / PS).